The following is a 1563-amino-acid chain: Pentafunctional AROM polypeptide (1563 aa).

Residues 1–382 form a 3-dehydroquinate synthase region; it reads MAEPISNPTR…YEPKASVVED (382 aa). Residues 48–50, 82–85, 113–115, and D118 each bind NAD(+); these read DTN, EYSK, and GGV. 7-phospho-2-dehydro-3-deoxy-D-arabino-heptonate is bound at residue R129. 138–139 lines the NAD(+) pocket; it reads TT. 7-phospho-2-dehydro-3-deoxy-D-arabino-heptonate-binding residues include D145 and K151. An NAD(+)-binding site is contributed by K160. N161 contacts 7-phospho-2-dehydro-3-deoxy-D-arabino-heptonate. NAD(+) contacts are provided by residues 178–181 and N189; that span reads FLNT. Position 193 (E193) interacts with Zn(2+). Residues 193-196 and K248 each bind 7-phospho-2-dehydro-3-deoxy-D-arabino-heptonate; that span reads EVIK. E258 (proton acceptor; for 3-dehydroquinate synthase activity) is an active-site residue. 7-phospho-2-dehydro-3-deoxy-D-arabino-heptonate is bound by residues 262–266 and H269; that span reads RNLLN. Residue H269 coordinates Zn(2+). H273 acts as the Proton acceptor; for 3-dehydroquinate synthase activity in catalysis. 2 residues coordinate 7-phospho-2-dehydro-3-deoxy-D-arabino-heptonate: H285 and K354. Position 285 (H285) interacts with Zn(2+). The segment at 395–834 is EPSP synthase; the sequence is VFAGVPKDLN…WDTMSNYFKV (440 aa). Catalysis depends on C816, which acts as the For EPSP synthase activity. A shikimate kinase region spans residues 857 to 1051; sequence PKSIFIIGMR…KKKPHSFFVS (195 aa). 864–871 is a binding site for ATP; that stretch reads GMRGAGKS. Residues 1052-1265 form a 3-dehydroquinase region; that stretch reads LTVPNVSKAL…AAPGQLSAAE (214 aa). The active-site Proton acceptor; for 3-dehydroquinate dehydratase activity is H1168. The active-site Schiff-base intermediate with substrate; for 3-dehydroquinate dehydratase activity is K1196. A shikimate dehydrogenase region spans residues 1278 to 1563; sequence PRSFHLFGNP…TDAQAAVMGN (286 aa).

This sequence in the N-terminal section; belongs to the sugar phosphate cyclases superfamily. Dehydroquinate synthase family. In the 2nd section; belongs to the EPSP synthase family. The protein in the 3rd section; belongs to the shikimate kinase family. It in the 4th section; belongs to the type-I 3-dehydroquinase family. This sequence in the C-terminal section; belongs to the shikimate dehydrogenase family. In terms of assembly, homodimer. Zn(2+) serves as cofactor.

It localises to the cytoplasm. It catalyses the reaction 7-phospho-2-dehydro-3-deoxy-D-arabino-heptonate = 3-dehydroquinate + phosphate. The enzyme catalyses 3-dehydroquinate = 3-dehydroshikimate + H2O. The catalysed reaction is shikimate + NADP(+) = 3-dehydroshikimate + NADPH + H(+). It carries out the reaction shikimate + ATP = 3-phosphoshikimate + ADP + H(+). It catalyses the reaction 3-phosphoshikimate + phosphoenolpyruvate = 5-O-(1-carboxyvinyl)-3-phosphoshikimate + phosphate. It functions in the pathway metabolic intermediate biosynthesis; chorismate biosynthesis; chorismate from D-erythrose 4-phosphate and phosphoenolpyruvate: step 2/7. Its pathway is metabolic intermediate biosynthesis; chorismate biosynthesis; chorismate from D-erythrose 4-phosphate and phosphoenolpyruvate: step 3/7. The protein operates within metabolic intermediate biosynthesis; chorismate biosynthesis; chorismate from D-erythrose 4-phosphate and phosphoenolpyruvate: step 4/7. It participates in metabolic intermediate biosynthesis; chorismate biosynthesis; chorismate from D-erythrose 4-phosphate and phosphoenolpyruvate: step 5/7. It functions in the pathway metabolic intermediate biosynthesis; chorismate biosynthesis; chorismate from D-erythrose 4-phosphate and phosphoenolpyruvate: step 6/7. The AROM polypeptide catalyzes 5 consecutive enzymatic reactions in prechorismate polyaromatic amino acid biosynthesis. This Neurospora crassa (strain ATCC 24698 / 74-OR23-1A / CBS 708.71 / DSM 1257 / FGSC 987) protein is Pentafunctional AROM polypeptide.